The chain runs to 382 residues: MPYFDYASTKPVDERVVEAMLPYMTEHFGNPSSVHSYGFKAREVIEEARGKISELINGGGGDIVFTSGATESNNLALIGYAMRNARKGKHVLVSSIEHMSVINPAKYLQKQGFEVEFIPVDKYGTVDLEFIEEKIREDTILVSVQHANNEIGTIQPIKEISEIINGRAALHVDATASLGQIEVDVEKIGADMLTISSNDIYGPKGVGALWVRQGVRLQPIILGGGQEKGLRSGSENVPAIVGFGKAAEITAKEWGEEAGRLRRLRDRIIDNVLKIEESYLNGHPEKRLPNNVNVRFSYIEGESIVLSLDMAGIQASTGSACSSKTLQPSHVLMACGLKHEEAHGTLLLTLGRYNTDEDVDRLLEVLPGVIERLRSMSPLYRR.

N149 contributes to the pyridoxal 5'-phosphate binding site. Residue C321 is the Cysteine persulfide intermediate of the active site. [2Fe-2S] cluster is bound at residue C321.

The protein belongs to the class-V pyridoxal-phosphate-dependent aminotransferase family. NifS/IscS subfamily. In terms of assembly, homodimer. Forms a heterotetramer with IscU, interacts with other sulfur acceptors. Pyridoxal 5'-phosphate serves as cofactor.

The protein resides in the cytoplasm. The enzyme catalyses (sulfur carrier)-H + L-cysteine = (sulfur carrier)-SH + L-alanine. The protein operates within cofactor biosynthesis; iron-sulfur cluster biosynthesis. In terms of biological role, master enzyme that delivers sulfur to a number of partners involved in Fe-S cluster assembly, tRNA modification or cofactor biosynthesis. Catalyzes the removal of elemental sulfur atoms from cysteine to produce alanine. Functions as a sulfur delivery protein for Fe-S cluster synthesis onto IscU, an Fe-S scaffold assembly protein, as well as other S acceptor proteins. The sequence is that of Cysteine desulfurase IscS 1 from Archaeoglobus fulgidus (strain ATCC 49558 / DSM 4304 / JCM 9628 / NBRC 100126 / VC-16).